Here is a 37-residue protein sequence, read N- to C-terminus: MSDIN-like toxin proprotein 5 (37 aa).

Residues 1–10 (MSDINATRLP) constitute a propeptide that is removed on maturation. Residues 11-20 (LFFPPDFRPP) constitute a cross-link (cyclopeptide (Leu-Pro)). Positions 21–37 (CVGDADNFTLTRGENLC) are excised as a propeptide.

The protein belongs to the MSDIN fungal toxin family. Post-translationally, processed by the macrocyclase-peptidase enzyme POPB to yield a toxic cyclic decapeptide. POPB first removes 10 residues from the N-terminus. Conformational trapping of the remaining peptide forces the enzyme to release this intermediate rather than proceed to macrocyclization. The enzyme rebinds the remaining peptide in a different conformation and catalyzes macrocyclization of the N-terminal 10 residues. Expressed in basidiocarps.

Functionally, probable toxin that belongs to the MSDIN-like toxin family responsible for a large number of food poisoning cases and deaths. The protein is MSDIN-like toxin proprotein 5 of Amanita exitialis (Guangzhou destroying angel).